Reading from the N-terminus, the 440-residue chain is NADH-quinone oxidoreductase subunit D (440 aa).

It belongs to the complex I 49 kDa subunit family. In terms of assembly, NDH-1 is composed of 14 different subunits. Subunits NuoB, C, D, E, F, and G constitute the peripheral sector of the complex.

It localises to the cell membrane. The enzyme catalyses a quinone + NADH + 5 H(+)(in) = a quinol + NAD(+) + 4 H(+)(out). Its function is as follows. NDH-1 shuttles electrons from NADH, via FMN and iron-sulfur (Fe-S) centers, to quinones in the respiratory chain. The immediate electron acceptor for the enzyme in this species is believed to be a menaquinone. Couples the redox reaction to proton translocation (for every two electrons transferred, four hydrogen ions are translocated across the cytoplasmic membrane), and thus conserves the redox energy in a proton gradient. This chain is NADH-quinone oxidoreductase subunit D, found in Mycobacterium bovis (strain ATCC BAA-935 / AF2122/97).